The primary structure comprises 355 residues: WD repeat domain phosphoinositide-interacting protein 4 (355 aa).

WD repeat units follow at residues 2–40 and 185–225; these read SQQRGVNGLRFNQDQSCFCCAMETGVRIFNIEPLMEKGH and AHQS…QLVE. The L/FRRG motif signature appears at 226-229; sequence LRRG. Residues 230–269 form a WD 3 repeat; it reads TDPATLYCINFSHDSSFLCSSSDKGTVHIFALKDTKLNRR.

It belongs to the WD repeat PROPPIN family.

The protein localises to the preautophagosomal structure. Component of the autophagy machinery that controls the major intracellular degradation process by which cytoplasmic materials are packaged into autophagosomes and delivered to lysosomes for degradation. Binds phosphatidylinositol 3-phosphate (PtdIns3P). This Xenopus laevis (African clawed frog) protein is WD repeat domain phosphoinositide-interacting protein 4 (wdr45).